Here is a 122-residue protein sequence, read N- to C-terminus: Small ribosomal subunit protein uS13 (122 aa).

The disordered stretch occupies residues 96–122; sequence LPVRGQRTKTNSRTRKGKRKTIAGKKK. The span at 101 to 122 shows a compositional bias: basic residues; it reads QRTKTNSRTRKGKRKTIAGKKK.

Belongs to the universal ribosomal protein uS13 family. As to quaternary structure, part of the 30S ribosomal subunit. Forms a loose heterodimer with protein S19. Forms two bridges to the 50S subunit in the 70S ribosome.

Functionally, located at the top of the head of the 30S subunit, it contacts several helices of the 16S rRNA. In the 70S ribosome it contacts the 23S rRNA (bridge B1a) and protein L5 of the 50S subunit (bridge B1b), connecting the 2 subunits; these bridges are implicated in subunit movement. Contacts the tRNAs in the A and P-sites. This Chlamydia trachomatis serovar L2 (strain ATCC VR-902B / DSM 19102 / 434/Bu) protein is Small ribosomal subunit protein uS13.